Here is an 800-residue protein sequence, read N- to C-terminus: Phenylalanine--tRNA ligase beta subunit (800 aa).

Positions 39 to 154 (TKDIKNLVVG…EAQVPGTDAL (116 aa)) constitute a tRNA-binding domain. Positions 408–483 (AFITPIDITA…RIYGYDDIPS (76 aa)) constitute a B5 domain. Positions 461, 467, 470, and 471 each coordinate Mg(2+). The region spanning 708–800 (PRFPGMSRDI…ALIEQGAVIR (93 aa)) is the FDX-ACB domain.

It belongs to the phenylalanyl-tRNA synthetase beta subunit family. Type 1 subfamily. Tetramer of two alpha and two beta subunits. Requires Mg(2+) as cofactor.

The protein resides in the cytoplasm. The catalysed reaction is tRNA(Phe) + L-phenylalanine + ATP = L-phenylalanyl-tRNA(Phe) + AMP + diphosphate + H(+). The chain is Phenylalanine--tRNA ligase beta subunit from Staphylococcus aureus (strain USA300).